A 148-amino-acid chain; its full sequence is Calcium-permeable cation-selective channel WeiTsing (148 aa).

Residues 1-25 are Cytoplasmic-facing; sequence METVSAVNQTLPISGGEPVKFTTYS. A helical membrane pass occupies residues 26–46; that stretch reads AAVHKVLVMINAGILGLLQLV. Topologically, residues 47-51 are lumenal; it reads SQQSS. The helical transmembrane segment at 52–72 threads the bilayer; the sequence is VLETHKAAFLCFCVFILFYAV. Over 73–90 the chain is Cytoplasmic; that stretch reads LRVREAMDVRLQPGLVPR. A helical transmembrane segment spans residues 91 to 110; that stretch reads LIGHGSHLFGGLAALVLVSV. The Lumenal segment spans residues 111-116; the sequence is VSTAFS. The helical transmembrane segment at 117–133 threads the bilayer; it reads IVLFLLWFIWLSAVVYL. The Cytoplasmic segment spans residues 134 to 148; the sequence is ETNKPSACPPQLPPV.

As to quaternary structure, forms pentamers with a central pore to produce an ion channel.

It is found in the endoplasmic reticulum membrane. It catalyses the reaction Ca(2+)(in) = Ca(2+)(out). It carries out the reaction Na(+)(in) = Na(+)(out). Its function is as follows. Calcium-permeable cation-selective channel conferring a broad-spectrum clubroot resistance by supporting cytosolic Ca(2+) increase in root pericycle cells. Triggers immunity toward fungal pathogens such as Plasmodiophora brassicae (Pb) and induces defenses. Also permeable to sodium ion Na(+) and possibly other cations. The protein is Calcium-permeable cation-selective channel WeiTsing of Arabidopsis thaliana (Mouse-ear cress).